We begin with the raw amino-acid sequence, 243 residues long: NAD-dependent protein deacetylase (243 aa).

The region spanning 1 to 243 (MKHDLETLKH…VSVVKSLMTE (243 aa)) is the Deacetylase sirtuin-type domain. Residues A24, F35, R36, Q105, I107, D108, and H123 each contribute to the NAD(+) site. F35 lines the nicotinamide pocket. Residues I107 and D108 each coordinate nicotinamide. The active-site Proton acceptor is the H123. C131, C134, C151, and C154 together coordinate Zn(2+). 4 residues coordinate NAD(+): S192, S193, N215, and D232.

The protein belongs to the sirtuin family. Class U subfamily. It depends on Zn(2+) as a cofactor.

It is found in the cytoplasm. It catalyses the reaction N(6)-acetyl-L-lysyl-[protein] + NAD(+) + H2O = 2''-O-acetyl-ADP-D-ribose + nicotinamide + L-lysyl-[protein]. NAD-dependent protein deacetylase which modulates the activities of several enzymes which are inactive in their acetylated form. The sequence is that of NAD-dependent protein deacetylase from Staphylococcus aureus (strain NCTC 8325 / PS 47).